A 392-amino-acid chain; its full sequence is Tryptophan synthase beta chain (392 aa).

Position 86 is an N6-(pyridoxal phosphate)lysine (Lys-86).

This sequence belongs to the TrpB family. Tetramer of two alpha and two beta chains. Pyridoxal 5'-phosphate is required as a cofactor.

It carries out the reaction (1S,2R)-1-C-(indol-3-yl)glycerol 3-phosphate + L-serine = D-glyceraldehyde 3-phosphate + L-tryptophan + H2O. The protein operates within amino-acid biosynthesis; L-tryptophan biosynthesis; L-tryptophan from chorismate: step 5/5. The beta subunit is responsible for the synthesis of L-tryptophan from indole and L-serine. The sequence is that of Tryptophan synthase beta chain (trpB) from Buchnera aphidicola subsp. Melaphis rhois.